Here is a 188-residue protein sequence, read N- to C-terminus: MVKVLVVAFGGQYNHLIKRSIERIGHEAALRPYNLPPPDEGEFDCVVFGGGPLTMPKDFDKVKGLEAYLRWKKPLLGICLGHQVLALLNGGEVGPSPKPEYGDVTIFVDDEDDILRGLAPSFRAWESHNEEVLREPPNSKVIAHSENTRVQALKYYNGPYYGVQFHPEVQHTEKGSLVFQNFVELCKR.

The region spanning 3 to 188 (KVLVVAFGGQ…FQNFVELCKR (186 aa)) is the Glutamine amidotransferase type-1 domain. The active-site Nucleophile is the Cys79. Active-site residues include His166 and Glu168.

Heterodimer composed of a glutamine amidotransferase subunit (A) and a GMP-binding subunit (B).

The enzyme catalyses XMP + L-glutamine + ATP + H2O = GMP + L-glutamate + AMP + diphosphate + 2 H(+). Its pathway is purine metabolism; GMP biosynthesis; GMP from XMP (L-Gln route): step 1/1. Functionally, catalyzes the synthesis of GMP from XMP. The chain is GMP synthase [glutamine-hydrolyzing] subunit A from Ignicoccus hospitalis (strain KIN4/I / DSM 18386 / JCM 14125).